Reading from the N-terminus, the 73-residue chain is uncharacterized protein (73 aa).

The protein belongs to the asfivirus I73R family.

It localises to the virion. This is an uncharacterized protein from Ornithodoros (relapsing fever ticks).